The sequence spans 187 residues: Elongation factor P (187 aa).

Belongs to the elongation factor P family.

It localises to the cytoplasm. It functions in the pathway protein biosynthesis; polypeptide chain elongation. Involved in peptide bond synthesis. Stimulates efficient translation and peptide-bond synthesis on native or reconstituted 70S ribosomes in vitro. Probably functions indirectly by altering the affinity of the ribosome for aminoacyl-tRNA, thus increasing their reactivity as acceptors for peptidyl transferase. The polypeptide is Elongation factor P (Arthrobacter sp. (strain FB24)).